The chain runs to 109 residues: Cell division suppressor protein YneA (109 aa).

One can recognise a LysM domain in the interval 39 to 90 (SEVNVNEGDSLWALADQYAGKSDMAKADFVSWVEKENNLSDGHVEAGDSVVI).

It belongs to the YneA family.

The protein resides in the cytoplasm. Functionally, inhibits cell division during the SOS response. Affects a later stage of the cell division protein assembly, after the assembly of the Z ring, by probably suppressing recruitment of FtsL and/or DivIC to the division machinery. The chain is Cell division suppressor protein YneA from Listeria monocytogenes serovar 1/2a (strain ATCC BAA-679 / EGD-e).